The chain runs to 435 residues: Membrane-bound ghrelin O-acyltransferase MBOAT4 (435 aa).

The Lumenal segment spans residues 1-5 (MDWLQ). A helical membrane pass occupies residues 6–26 (FFFLHPVSLYQGAAFPFALLF). The Cytoplasmic segment spans residues 27-40 (NYLCITESFPTRAR). A helical membrane pass occupies residues 41–56 (YLFLLAGGGVLALAAM). Residues 57 to 59 (GPY) lie on the Lumenal side of the membrane. The chain crosses the membrane as a helical span at residues 60–76 (ALLIFIPALCAVAMISS). Over 77–82 (LSPQEV) the chain is Cytoplasmic. Residues 83–101 (HGLTFFFQMGWQTLCHLGL) traverse the membrane as a helical segment. Residues 102-120 (HYKEYYLCEPPPVRFYITL) lie on the Lumenal side of the membrane. The helical transmembrane segment at 121–136 (SSLMLLTQRVTSLSLD) threads the bilayer. Topologically, residues 137-206 (ISEGKVEAAW…YPSISFWALT (70 aa)) are cytoplasmic. Residues 207-227 (WRGLQILGLECLKVALRRVVS) traverse the membrane as a helical segment. Residues 228–240 (AGAGLDDCQRLEC) lie on the Lumenal side of the membrane. A helical transmembrane segment spans residues 241–261 (IYIMWSTAGLFKLTYYSHWIL). The Cytoplasmic portion of the chain corresponds to 262-324 (DDSLLHAAGF…KRLVFQRSRR (63 aa)). Active-site residues include N307 and H338. A helical transmembrane segment spans residues 325–338 (WPVLQTFAFSAWWH). Residues 339–340 (GL) lie on the Lumenal side of the membrane. Residues 341–357 (HPGQVFGFLCWSVMVKA) form a helical membrane-spanning segment. The Cytoplasmic portion of the chain corresponds to 358 to 376 (DYLIHTFANGCIRSWPLRL). A helical transmembrane segment spans residues 377–397 (LYRSLTWAHTQIIIAYVMLAV). Over 398 to 407 (EGRSFSSLCR) the chain is Lumenal. Residues 408-428 (LCCSYNSIFPVTYCLLLFLLA) form a helical membrane-spanning segment. The Cytoplasmic portion of the chain corresponds to 429 to 435 (RRKHKCN).

Belongs to the membrane-bound acyltransferase family. In terms of assembly, monomer. Not glycosylated.

The protein resides in the endoplasmic reticulum membrane. The catalysed reaction is octanoyl-CoA + L-seryl-[protein] = O-octanoyl-L-seryl-[protein] + CoA. It carries out the reaction decanoyl-CoA + L-seryl-[protein] = O-decanoyl-L-seryl-[protein] + CoA. It catalyses the reaction L-seryl-[protein] + acetyl-CoA = O-acetyl-L-seryl-[protein] + CoA. The enzyme catalyses L-seryl-[protein] + butanoyl-CoA = O-butanoyl-L-seryl-[protein] + CoA. The catalysed reaction is pentanoyl-CoA + L-seryl-[protein] = O-pentanoyl-L-seryl-[protein] + CoA. It carries out the reaction hexanoyl-CoA + L-seryl-[protein] = O-hexanoyl-L-seryl-[protein] + CoA. It catalyses the reaction heptanoyl-CoA + L-seryl-[protein] = O-heptanoyl-L-seryl-[protein] + CoA. The enzyme catalyses nonanoyl-CoA + L-seryl-[protein] = O-nonanoyl-L-seryl-[protein] + CoA. The catalysed reaction is L-seryl-[protein] + dodecanoyl-CoA = O-dodecanoyl-L-seryl-[protein] + CoA. It carries out the reaction L-seryl-[protein] + tetradecanoyl-CoA = O-tetradecanoyl-L-seryl-[protein] + CoA. It catalyses the reaction a fatty acyl-CoA + L-seryl-[protein] = O-fatty acyl-L-seryl-[protein] + CoA. Functionally, catalyzes ghrelin acylation at 'Ser-3' using preferentially octanoyl-CoA, hexanoyl-CoA and decanoyl-CoA as acyl-CoA donors leading to ghrelin activity. In vitro uses also acyl-CoA donors of different lengths from short-chain (C2) to long-chain fatty acids (C16) knowing that acyl-CoA donors from butanoyl-CoA (C4) to dodecanoyl-CoA (C12) are more efficient compared to longer acyl-CoA donors, such as myristoyl-CoA (C14) and palmitoyl-CoA (C16) that are not efficient. The polypeptide is Membrane-bound ghrelin O-acyltransferase MBOAT4 (Rattus norvegicus (Rat)).